We begin with the raw amino-acid sequence, 75 residues long: F1845 fimbrial adhesin operon regulatory protein DaaF (75 aa).

Functionally, may have a possible regulatory function on the expression of the other daa genes. The sequence is that of F1845 fimbrial adhesin operon regulatory protein DaaF (daaF) from Escherichia coli.